The chain runs to 251 residues: uncharacterized protein (251 aa).

The signal sequence occupies residues 1–19; that stretch reads MRYLKRITIYISLLILVSG. Cys-20 is lipidated: N-palmitoyl cysteine. The S-diacylglycerol cysteine moiety is linked to residue Cys-20.

It belongs to the staphylococcal tandem lipoprotein family.

The protein localises to the cell membrane. This is an uncharacterized protein from Staphylococcus epidermidis (strain ATCC 12228 / FDA PCI 1200).